The following is a 90-amino-acid chain: Putative toxin RelE1 (90 aa).

This sequence belongs to the RelE toxin family.

In terms of biological role, toxic component of a type II toxin-antitoxin (TA) system. Its cognate antitoxin is RelB1 (Potential). This is Putative toxin RelE1 (relE1) from Methanocaldococcus jannaschii (strain ATCC 43067 / DSM 2661 / JAL-1 / JCM 10045 / NBRC 100440) (Methanococcus jannaschii).